The chain runs to 142 residues: Transcription antitermination protein NusB (142 aa).

This sequence belongs to the NusB family.

In terms of biological role, involved in transcription antitermination. Required for transcription of ribosomal RNA (rRNA) genes. Binds specifically to the boxA antiterminator sequence of the ribosomal RNA (rrn) operons. This chain is Transcription antitermination protein NusB, found in Anaeromyxobacter dehalogenans (strain 2CP-1 / ATCC BAA-258).